Reading from the N-terminus, the 318-residue chain is Ribosomal RNA small subunit methyltransferase H (318 aa).

Residues 42–44 (GGH), Asp62, Phe86, Asp108, and Gln115 contribute to the S-adenosyl-L-methionine site.

This sequence belongs to the methyltransferase superfamily. RsmH family.

The protein resides in the cytoplasm. The enzyme catalyses cytidine(1402) in 16S rRNA + S-adenosyl-L-methionine = N(4)-methylcytidine(1402) in 16S rRNA + S-adenosyl-L-homocysteine + H(+). Functionally, specifically methylates the N4 position of cytidine in position 1402 (C1402) of 16S rRNA. This is Ribosomal RNA small subunit methyltransferase H from Yersinia pestis (strain Pestoides F).